A 318-amino-acid chain; its full sequence is ATP synthase gamma chain (318 aa).

Belongs to the ATPase gamma chain family. As to quaternary structure, F-type ATPases have 2 components, CF(1) - the catalytic core - and CF(0) - the membrane proton channel. CF(1) has five subunits: alpha(3), beta(3), gamma(1), delta(1), epsilon(1). CF(0) has three main subunits: a, b and c.

Its subcellular location is the cell membrane. Its function is as follows. Produces ATP from ADP in the presence of a proton gradient across the membrane. The gamma chain is believed to be important in regulating ATPase activity and the flow of protons through the CF(0) complex. The polypeptide is ATP synthase gamma chain (Lactobacillus gasseri (strain ATCC 33323 / DSM 20243 / BCRC 14619 / CIP 102991 / JCM 1131 / KCTC 3163 / NCIMB 11718 / NCTC 13722 / AM63)).